Reading from the N-terminus, the 163-residue chain is Ribosome maturation factor RimM (163 aa).

The region spanning 92–162 (EDEFYVADLV…AGRAVVRPPE (71 aa)) is the PRC barrel domain.

The protein belongs to the RimM family. Binds ribosomal protein uS19.

Its subcellular location is the cytoplasm. In terms of biological role, an accessory protein needed during the final step in the assembly of 30S ribosomal subunit, possibly for assembly of the head region. Essential for efficient processing of 16S rRNA. May be needed both before and after RbfA during the maturation of 16S rRNA. It has affinity for free ribosomal 30S subunits but not for 70S ribosomes. This Rubrobacter xylanophilus (strain DSM 9941 / JCM 11954 / NBRC 16129 / PRD-1) protein is Ribosome maturation factor RimM.